Here is a 274-residue protein sequence, read N- to C-terminus: MQQSLLTFEQVYYTYPGTQQSVLNGITLQIPQGKRCALIGRNGCGKTTLFSLANGLYKPQQGRVYWQEKALQYDRKNLMQLRQKVGLVFQNPEQQLVASTVEEDISYGLCNLGLPIADIQQRVTQALVEFELTELAERPVHHLSLGQKKRVSLADVMVLRPELLLLDEPTAYLDRPQSRNLMAMLNKIYKSGTTILMASHDLDLVYCWSDWVFVMDAGRLILEGKPEDIFSQREILDSIELGLPPIYEIFITEELATKEHNSENFRRRILQFFC.

An ABC transporter domain is found at 6-242 (LTFEQVYYTY…REILDSIELG (237 aa)). 40-47 (GRNGCGKT) contributes to the ATP binding site.

The protein belongs to the ABC transporter superfamily.

It localises to the cell inner membrane. Its function is as follows. Probably part of an ABC transporter complex. Responsible for energy coupling to the transport system. This is Putative ABC transporter ATP-binding protein alr3946 from Nostoc sp. (strain PCC 7120 / SAG 25.82 / UTEX 2576).